A 295-amino-acid chain; its full sequence is Protoheme IX farnesyltransferase 2 (295 aa).

A run of 9 helical transmembrane segments spans residues 9–29 (ITKP…FFLA), 36–56 (FALF…GCVF), 83–103 (LTLA…LLYV), 108–128 (LAAF…SLWL), 135–155 (GTLV…CAVS), 163–183 (VTLL…IAIF), 209–229 (IVLY…GGYA), 230–250 (GLGY…MAWG), and 264–284 (VFGF…VDSQ).

Belongs to the UbiA prenyltransferase family. Protoheme IX farnesyltransferase subfamily.

The protein localises to the cell inner membrane. The enzyme catalyses heme b + (2E,6E)-farnesyl diphosphate + H2O = Fe(II)-heme o + diphosphate. It participates in porphyrin-containing compound metabolism; heme O biosynthesis; heme O from protoheme: step 1/1. In terms of biological role, converts heme B (protoheme IX) to heme O by substitution of the vinyl group on carbon 2 of heme B porphyrin ring with a hydroxyethyl farnesyl side group. The sequence is that of Protoheme IX farnesyltransferase 2 from Pseudomonas entomophila (strain L48).